We begin with the raw amino-acid sequence, 118 residues long: Hisactophilin-2 (118 aa).

The N-myristoyl glycine moiety is linked to residue glycine 2. The tract at residues 8–109 (AHNGHYLSAE…HVSTSHHHDH (102 aa)) is contains several HHXH repeats. 2 consecutive repeat copies span residues 34-46 (FHIENHGSKVALR) and 74-86 (FHLEHHHGKVSIK). Positions 34 to 86 (FHIENHGSKVALRTHCGKYVSIGDHKQVYLSHHLHGDHSLFHLEHHHGKVSIK) are 2 X 13 AA approximate repeats. The interval 99 to 118 (GHVSTSHHHDHHATFEEHIL) is disordered.

The protein belongs to the hisactophilin family. Homodimer or heterodimer of hatA and hatB, linked by a disulfide bond. In terms of processing, phosphorylated.

It is found in the cytoplasm. The protein resides in the cell membrane. Its function is as follows. May act as an intracellular pH sensor that links chemotactic signals to responses in the microfilament system of the cells by nucleating actin polymerization or stabilizing the filaments. In Dictyostelium discoideum (Social amoeba), this protein is Hisactophilin-2 (hatB).